The chain runs to 101 residues: Large ribosomal subunit protein eL30 (101 aa).

It belongs to the eukaryotic ribosomal protein eL30 family.

The sequence is that of Large ribosomal subunit protein eL30 from Pyrobaculum calidifontis (strain DSM 21063 / JCM 11548 / VA1).